A 207-amino-acid polypeptide reads, in one-letter code: Ras-related protein Rab-7a (207 aa).

Threonine 2 bears the N-acetylthreonine mark. Residues serine 17, glycine 18, valine 19, glycine 20, lysine 21, threonine 22, serine 23, serine 34, asparagine 35, tyrosine 37, and threonine 40 each contribute to the GTP site. A Mg(2+)-binding site is contributed by threonine 22. The Switch 1 motif lies at tyrosine 28–isoleucine 41. Residues threonine 40 and aspartate 63 each coordinate Mg(2+). Glycine 66 lines the GTP pocket. Residues glutamine 67–aspartate 82 carry the Switch 2 motif. Phosphoserine is present on serine 72. Positions 125, 126, 128, 156, and 157 each coordinate GTP. Glycyl lysine isopeptide (Lys-Gly) (interchain with G-Cter in ubiquitin) cross-links involve residues lysine 191 and lysine 194. Residues cysteine 205 and cysteine 207 are each lipidated (S-geranylgeranyl cysteine). Cysteine 207 carries the post-translational modification Cysteine methyl ester.

This sequence belongs to the small GTPase superfamily. Rab family. In terms of assembly, interacts with NTRK1/TRKA, RILP, PSMA7, RNF115 and FYCO1. Interacts with the PIK3C3/VPS34-PIK3R4 complex. The GTP-bound form interacts with OSBPL1A and RAC1. Interacts with CLN3. Interacts with CHM, the substrate-binding subunit of the Rab geranylgeranyltransferase complex. Interacts with C9orf72. Does not interact with HPS4 and the BLOC-3 complex (heterodimer of HPS1 and HPS4). Interacts with CLN5. Interacts with PLEKHM1 (via N- and C-terminus). Interacts with PRPH; the interaction is direct. Interacts with VPS13A. The GDP-bound form interacts with RIMOC1. Interacts with the MON1A-CCZ1B complex and this interaction is enhanced in the presence of RIMOC1. Interacts with VPS39 and VPS41. Forms a ternary complex with LAMP2 and RUFY4; the interaction with LAMP2 is mediated by RUFY4 (via RUN and coiled coil domains). Mg(2+) serves as cofactor. Deubiquitination at Lys-191 and Lys-194 by USP32. In terms of processing, phosphorylated at Ser-72 by LRRK1; phosphorylation is dependent on protein kinase C (PKC) activation of LRRK1. Post-translationally, prenylated. Prenylation is required for association with cellular membranes. As to expression, widely expressed. High expression in liver, heart and kidney. Found in sensory and motor neurons.

The protein localises to the cytoplasmic vesicle. It localises to the phagosome membrane. It is found in the late endosome membrane. The protein resides in the lysosome membrane. Its subcellular location is the melanosome membrane. The protein localises to the autophagosome membrane. It localises to the lipid droplet. It is found in the endosome membrane. The protein resides in the mitochondrion membrane. It catalyses the reaction GTP + H2O = GDP + phosphate + H(+). With respect to regulation, regulated by guanine nucleotide exchange factors (GEFs) which promote the exchange of bound GDP for free GTP. Regulated by GTPase activating proteins (GAPs) which increase the GTP hydrolysis activity. Inhibited by GDP dissociation inhibitors (GDIs). In terms of biological role, the small GTPases Rab are key regulators of intracellular membrane trafficking, from the formation of transport vesicles to their fusion with membranes. Rabs cycle between an inactive GDP-bound form and an active GTP-bound form that is able to recruit to membranes different sets of downstream effectors directly responsible for vesicle formation, movement, tethering and fusion. In its active state, RAB7A binds to a variety of effector proteins playing a key role in the regulation of endo-lysosomal trafficking. Governs early-to-late endosomal maturation, microtubule minus-end as well as plus-end directed endosomal migration and positioning, and endosome-lysosome transport through different protein-protein interaction cascades. Also plays a central role in growth-factor-mediated cell signaling, nutrient-transporter-mediated nutrient uptake, neurotrophin transport in the axons of neurons and lipid metabolism. Also involved in regulation of some specialized endosomal membrane trafficking, such as maturation of melanosomes, pathogen-induced phagosomes (or vacuoles) and autophagosomes. Plays a role in the maturation and acidification of phagosomes that engulf pathogens, such as S.aureus and Mycobacteria. Plays a role in the fusion of phagosomes with lysosomes. In concert with RAC1, plays a role in regulating the formation of RBs (ruffled borders) in osteoclasts. Controls the endosomal trafficking and neurite outgrowth signaling of NTRK1/TRKA. Regulates the endocytic trafficking of the EGF-EGFR complex by regulating its lysosomal degradation. Involved in the ADRB2-stimulated lipolysis through lipophagy, a cytosolic lipase-independent autophagic pathway. Required for the exosomal release of SDCBP, CD63 and syndecan. Required for vesicular trafficking and cell surface expression of ACE2. May play a role in PRPH neuronal intermediate filament assembly. This is Ras-related protein Rab-7a from Mus musculus (Mouse).